Reading from the N-terminus, the 72-residue chain is uncharacterized protein (72 aa).

The segment at 51–72 (AKGGRQKGEVVGVDDQCKEHKE) is disordered.

This sequence belongs to the YiiE family.

This is an uncharacterized protein from Escherichia coli O157:H7.